The primary structure comprises 184 residues: MDHYLEIRVLPDPEFSSEMLMAALFAKLHRVLGARGQGDIGVSFPDVNVMPGARLRLHGSAQALQALEASTWRKGLTDYCQCSPVTPVPEIKGWRVVSRVQVKSNPQRLLRRSVKKGWLTEEQAIERLATQAEQRTDLPFLNMKSLSSQQLFKLFIRHGDLLKEPVKGEFSSYGLSATATIPWF.

It belongs to the CRISPR-associated endoribonuclease Cas6 family. Cas6f/Csy4, subtype I-F/Ypest subfamily.

In terms of biological role, CRISPR (clustered regularly interspaced short palindromic repeat) is an adaptive immune system that provides protection against mobile genetic elements (viruses, transposable elements and conjugative plasmids). CRISPR clusters contain sequences complementary to antecedent mobile elements and target invading nucleic acids. CRISPR clusters are transcribed and processed into CRISPR RNA (crRNA). Processes pre-crRNA into individual crRNA units. Functionally, complements a csy4 disruption in Pseudomonas aeruginosa PA14, restoring inhibition of biofilm formation and generation of crRNA. This Escherichia coli (strain UTI89 / UPEC) protein is CRISPR-associated endonuclease Cas6/Csy4 (cas6f).